Here is a 663-residue protein sequence, read N- to C-terminus: DNA topoisomerase 1 (663 aa).

The Toprim domain maps to 4–137 (SWLIITEKDN…TVKVDRVRYS (134 aa)). Mg(2+) is bound by residues Glu10 and Asp106. The Topo IA-type catalytic domain maps to 155–558 (DFNLANAALA…ESREMLLQIL (404 aa)). Residues 193 to 198 (SVGRVQ) are interaction with DNA. The active-site O-(5'-phospho-DNA)-tyrosine intermediate is the Tyr306. The C4-type 1 zinc finger occupies 583 to 610 (CPECGGELVVRQSKAGKRFIGCSNYPDC). The C4-type 2; atypical zinc-finger motif lies at 629–653 (CKEHEIKEVKIRTKKGYWNLGCPYC).

This sequence belongs to the type IA topoisomerase family. Monomer. The cofactor is Mg(2+).

The catalysed reaction is ATP-independent breakage of single-stranded DNA, followed by passage and rejoining.. Its function is as follows. Releases the supercoiling and torsional tension of DNA, which is introduced during the DNA replication and transcription, by transiently cleaving and rejoining one strand of the DNA duplex. Introduces a single-strand break via transesterification at a target site in duplex DNA. The scissile phosphodiester is attacked by the catalytic tyrosine of the enzyme, resulting in the formation of a DNA-(5'-phosphotyrosyl)-enzyme intermediate and the expulsion of a 3'-OH DNA strand. The free DNA strand then undergoes passage around the unbroken strand, thus removing DNA supercoils. Finally, in the religation step, the DNA 3'-OH attacks the covalent intermediate to expel the active-site tyrosine and restore the DNA phosphodiester backbone. This chain is DNA topoisomerase 1, found in Archaeoglobus fulgidus (strain ATCC 49558 / DSM 4304 / JCM 9628 / NBRC 100126 / VC-16).